Here is a 359-residue protein sequence, read N- to C-terminus: CCAAT/enhancer-binding protein alpha (359 aa).

The segment at 1–55 is disordered; it reads MESADFYEVEPRPPMSSHLQSPPHAPSNAAFGFPRGAGPAPPPAPPAAPEPLGGI. Residues 1 to 70 form a required to repress E2F1:TFDP1-mediated transcription, to inhibit cell cycle and to induce adipocyte differentiation region; the sequence is MESADFYEVE…SIDISAYIDP (70 aa). Residues 29-38 show a composition bias toward low complexity; sequence AAFGFPRGAG. Pro residues predominate over residues 39-49; that stretch reads PAPPPAPPAAP. The interval 54–72 is required for interaction with TRIB1; the sequence is GICEHETSIDISAYIDPAA. A required to induce adipocyte differentiation region spans residues 126-200; sequence PPGYGCAAAG…HASPAHLAAP (75 aa). Residue K159 is modified to N6-acetyllysine; alternate. A Glycyl lysine isopeptide (Lys-Gly) (interchain with G-Cter in SUMO); alternate cross-link involves residue K159. Residue K159 forms a Glycyl lysine isopeptide (Lys-Gly) (interchain with G-Cter in SUMO2); alternate linkage. 2 disordered regions span residues 176–195 and 213–293; these read LFPYQPPPPPPPPHPHASPA and TMHL…RERN. A compositionally biased stretch (pro residues) spans 179–191; sequence YQPPPPPPPPHPH. The required to functionally cooperate with SREBF1 in promoter activation stretch occupies residues 180–194; sequence QPPPPPPPPHPHASP. S193 is subject to Phosphoserine. Pro residues predominate over residues 220–232; the sequence is HPTPPPTPVPSPH. T222 and T226 each carry phosphothreonine; by GSK3. The residue at position 230 (S230) is a Phosphoserine; by GSK3. Low complexity predominate over residues 233 to 255; sequence AAPALGAAGLPGPGSALKGLAGA. The interaction with FOXO1 stretch occupies residues 240–359; sequence AGLPGPGSAL…SLVKAMGNCA (120 aa). A compositionally biased stretch (gly residues) spans 261 to 272; the sequence is TGGGGGGSGAGA. Residues 277 to 293 show a composition bias toward basic and acidic residues; sequence KSVDKNSNEYRVRRERN. Residues 283–346 form the bZIP domain; it reads SNEYRVRRER…DTLRGIFRQL (64 aa). Residues 286 to 301 mediate DNA binding; it reads YRVRRERNNIAVRKSR. The interval 287 to 314 is basic motif; sequence RVRRERNNIAVRKSRDKAKQRNVETQQK. The leucine-zipper stretch occupies residues 318 to 346; the sequence is LTSDNDRLRKRVEQLSRELDTLRGIFRQL.

It belongs to the bZIP family. C/EBP subfamily. Binds DNA as a homodimer and as a heterodimer. Can form stable heterodimers with CEBPB, CEBPD, CEBPE and CEBPG. Interacts with PRDM16. Interacts with UBN1. Interacts with ZNF638; this interaction increases transcriptional activation. Interacts with the complex TFDP2:E2F1; the interaction prevents CEBPA binding to target gene promoters and represses its transcriptional activity. Interacts with RB1. Interacts (when phosphorylated at Ser-193) with CDK2, CDK4, E2F4 and SMARCA2. Interacts with SREBPF1. Interacts with FOXO1 (via the Fork-head domain); the interaction increases when FOXO1 is deacetylated. Interacts with SIX1. Interacts (via recognition sequence) with TRIB1. Interacts (via bZIP domain) with OVOL2 (via zinc-finger domains); the interaction inhibits the transcription factor activity of CEBPA and is required to repress adipogenesis. As to quaternary structure, interacts with TAF1A and UBTF. In terms of assembly, interacts with TAF1A and UBTF. Interacts with NPM1. Post-translationally, sumoylated, sumoylation blocks the inhibitory effect on cell proliferation by disrupting the interaction with SMARCA2. Phosphorylation at Ser-193 is required for interaction with CDK2, CDK4 and SWI/SNF complex leading to cell cycle inhibition. Dephosphorylated at Ser-193 by protein phosphatase 2A (PP2A) through PI3K/AKT signaling pathway regulation. Phosphorylation at Thr-222 and Thr-226 by GSK3 is constitutive in adipose tissue and lung. In liver, both Thr-222 and Thr-226 are phosphorylated only during feeding but not during fasting. Phosphorylation of the GSK3 consensus sites selectively decreases transactivation activity on IRE-controlled promoters. In terms of processing, ubiquitinated by COP1 upon interaction with TRIB1. In terms of tissue distribution, isoform 2 and isoform 3 are expressed in adipose tissue and liver (at protein level).

The protein localises to the nucleus. It localises to the nucleolus. Transcription factor that coordinates proliferation arrest and the differentiation of myeloid progenitors, adipocytes, hepatocytes, and cells of the lung and the placenta. Binds directly to the consensus DNA sequence 5'-T[TG]NNGNAA[TG]-3' acting as an activator on distinct target genes. During early embryogenesis, plays essential and redundant functions with CEBPB. Essential for the transition from common myeloid progenitors (CMP) to granulocyte/monocyte progenitors (GMP). Critical for the proper development of the liver and the lung. Necessary for terminal adipocyte differentiation, is required for postnatal maintenance of systemic energy homeostasis and lipid storage. To regulate these different processes at the proper moment and tissue, interplays with other transcription factors and modulators. Down-regulates the expression of genes that maintain cells in an undifferentiated and proliferative state through E2F1 repression, which is critical for its ability to induce adipocyte and granulocyte terminal differentiation. Reciprocally E2F1 blocks adipocyte differentiation by binding to specific promoters and repressing CEBPA binding to its target gene promoters. Proliferation arrest also depends on a functional binding to SWI/SNF complex. In liver, regulates gluconeogenesis and lipogenesis through different mechanisms. To regulate gluconeogenesis, functionally cooperates with FOXO1 binding to IRE-controlled promoters and regulating the expression of target genes such as PCK1 or G6PC1. To modulate lipogenesis, interacts and transcriptionally synergizes with SREBF1 in promoter activation of specific lipogenic target genes such as ACAS2. In adipose tissue, seems to act as FOXO1 coactivator accessing to ADIPOQ promoter through FOXO1 binding sites. Functionally, can act as dominant-negative. Binds DNA and have transctivation activity, even if much less efficiently than isoform 2. Does not inhibit cell proliferation. Its function is as follows. Directly and specifically enhances ribosomal DNA transcription interacting with RNA polymerase I-specific cofactors and inducing histone acetylation. This Mus musculus (Mouse) protein is CCAAT/enhancer-binding protein alpha.